The primary structure comprises 405 residues: MTKKVNKVVLAYSGGLDTSVILKWLQETYNCEVVTFTADIGQGEEVEPAREKALKLGIKPENIFIEDLKEEFVRDYVFPMFRANAIYEGEYLLGTSIARPLIAKRQIEIARQVGADAVAHGATGKGNDQVRFEIAYLSLNPDITVIAPWREWDLNSREKLLKFAEEHRIPIEKHGKKSPYSMDANLLHISYEGGILEDPWAEPEEDMWRWTNSIENAPNEPEYITIDFEKGDPVAINGEPLSPAKLLEALNEYGKKHGIGRIDIVENRFVGMKSRGCYETPGGTILLKAHRAMESITLDREEAHEKDKLMPKYAELIYNGFWFSPEREMMQAAIDKTQENVSGTVRLKLYKGNVFVVGRKSPNSLFAPEFSTFEEDEVYNQKDAQGFIKLNALRFIIEGHVRRKK.

Residues 11–19 and A38 contribute to the ATP site; that span reads AYSGGLDTS. L-citrulline contacts are provided by Y91 and S96. G121 lines the ATP pocket. Positions 123, 127, and 128 each coordinate L-aspartate. An L-citrulline-binding site is contributed by N127. Residues R131, S181, S190, E266, and Y278 each contribute to the L-citrulline site.

Belongs to the argininosuccinate synthase family. Type 1 subfamily. As to quaternary structure, homotetramer.

It localises to the cytoplasm. It catalyses the reaction L-citrulline + L-aspartate + ATP = 2-(N(omega)-L-arginino)succinate + AMP + diphosphate + H(+). It functions in the pathway amino-acid biosynthesis; L-arginine biosynthesis; L-arginine from L-ornithine and carbamoyl phosphate: step 2/3. The protein is Argininosuccinate synthase of Nitratiruptor sp. (strain SB155-2).